The chain runs to 693 residues: Elongation factor G 1 (693 aa).

The region spanning 4–281 (NKLRNIGISA…AVTRFLPSPH (278 aa)) is the tr-type G domain. GTP contacts are provided by residues 13–20 (AHIDSGKT), 80–84 (DTPGH), and 134–137 (NKCD).

This sequence belongs to the TRAFAC class translation factor GTPase superfamily. Classic translation factor GTPase family. EF-G/EF-2 subfamily.

The protein resides in the cytoplasm. Catalyzes the GTP-dependent ribosomal translocation step during translation elongation. During this step, the ribosome changes from the pre-translocational (PRE) to the post-translocational (POST) state as the newly formed A-site-bound peptidyl-tRNA and P-site-bound deacylated tRNA move to the P and E sites, respectively. Catalyzes the coordinated movement of the two tRNA molecules, the mRNA and conformational changes in the ribosome. The sequence is that of Elongation factor G 1 from Borrelia garinii subsp. bavariensis (strain ATCC BAA-2496 / DSM 23469 / PBi) (Borreliella bavariensis).